The primary structure comprises 92 residues: MVVIVYVIVAYDVNVERVNRVKKFLRRYLNWVQNSLFEGELSSADLEEVKMGLREIINEDEDMVVIYRFRSADAFKREVMGIEKGLGGEEVI.

Aspartate 12 is a Mg(2+) binding site.

Belongs to the CRISPR-associated endoribonuclease Cas2 protein family. As to quaternary structure, homodimer, forms a heterotetramer with a Cas1 homodimer. Requires Mg(2+) as cofactor.

Functionally, CRISPR (clustered regularly interspaced short palindromic repeat), is an adaptive immune system that provides protection against mobile genetic elements (viruses, transposable elements and conjugative plasmids). CRISPR clusters contain sequences complementary to antecedent mobile elements and target invading nucleic acids. CRISPR clusters are transcribed and processed into CRISPR RNA (crRNA). Functions as a ssRNA-specific endoribonuclease. Involved in the integration of spacer DNA into the CRISPR cassette. This is CRISPR-associated endoribonuclease Cas2 2 (cas22) from Archaeoglobus fulgidus (strain ATCC 49558 / DSM 4304 / JCM 9628 / NBRC 100126 / VC-16).